We begin with the raw amino-acid sequence, 471 residues long: Ribulose bisphosphate carboxylase large chain (471 aa).

Positions 1–2 (MS) are excised as a propeptide. Residue Pro3 is modified to N-acetylproline. Lys14 is subject to N6,N6,N6-trimethyllysine. Residues Asn123 and Thr173 each contribute to the substrate site. Catalysis depends on Lys175, which acts as the Proton acceptor. Substrate is bound at residue Lys177. Lys201, Asp203, and Glu204 together coordinate Mg(2+). At Lys201 the chain carries N6-carboxylysine. Catalysis depends on His294, which acts as the Proton acceptor. Substrate contacts are provided by Arg295, His327, and Ser379.

It belongs to the RuBisCO large chain family. Type I subfamily. Heterohexadecamer of 8 large chains and 8 small chains; disulfide-linked. The disulfide link is formed within the large subunit homodimers. The cofactor is Mg(2+). Post-translationally, the disulfide bond which can form in the large chain dimeric partners within the hexadecamer appears to be associated with oxidative stress and protein turnover.

It localises to the plastid. Its subcellular location is the chloroplast. The enzyme catalyses 2 (2R)-3-phosphoglycerate + 2 H(+) = D-ribulose 1,5-bisphosphate + CO2 + H2O. It catalyses the reaction D-ribulose 1,5-bisphosphate + O2 = 2-phosphoglycolate + (2R)-3-phosphoglycerate + 2 H(+). RuBisCO catalyzes two reactions: the carboxylation of D-ribulose 1,5-bisphosphate, the primary event in carbon dioxide fixation, as well as the oxidative fragmentation of the pentose substrate in the photorespiration process. Both reactions occur simultaneously and in competition at the same active site. This chain is Ribulose bisphosphate carboxylase large chain, found in Drymophloeus subdistichus (Palm tree).